A 429-amino-acid polypeptide reads, in one-letter code: Serine hydroxymethyltransferase (429 aa).

Residues leucine 127 and 131–133 each bind (6S)-5,6,7,8-tetrahydrofolate; that span reads GHL. Residue lysine 236 is modified to N6-(pyridoxal phosphate)lysine. Glutamate 252 serves as a coordination point for (6S)-5,6,7,8-tetrahydrofolate.

Belongs to the SHMT family. Homodimer. Pyridoxal 5'-phosphate is required as a cofactor.

Its subcellular location is the cytoplasm. The enzyme catalyses (6R)-5,10-methylene-5,6,7,8-tetrahydrofolate + glycine + H2O = (6S)-5,6,7,8-tetrahydrofolate + L-serine. Its pathway is one-carbon metabolism; tetrahydrofolate interconversion. The protein operates within amino-acid biosynthesis; glycine biosynthesis; glycine from L-serine: step 1/1. Its function is as follows. Catalyzes the reversible interconversion of serine and glycine with tetrahydrofolate (THF) serving as the one-carbon carrier. This reaction serves as the major source of one-carbon groups required for the biosynthesis of purines, thymidylate, methionine, and other important biomolecules. Also exhibits THF-independent aldolase activity toward beta-hydroxyamino acids, producing glycine and aldehydes, via a retro-aldol mechanism. In Rhodospirillum centenum (strain ATCC 51521 / SW), this protein is Serine hydroxymethyltransferase.